The following is a 78-amino-acid chain: Acyl carrier protein BQ2027_MB0103 (78 aa).

Residues 1 to 78 (MRDRILAAVC…ELEAVCTEFG (78 aa)) enclose the Carrier domain. The residue at position 35 (S35) is an O-(pantetheine 4'-phosphoryl)serine.

This sequence belongs to the acyl carrier protein (ACP) family. The cofactor is pantetheine 4'-phosphate.

Its pathway is lipid metabolism; fatty acid metabolism. Its function is as follows. Acyl-carrier protein (ACP) involved in the biosynthesis of a unique class of isonitrile lipopeptides (INLPs) that seem to play a role in metal acquisition. Is the dedicated ACP for the loading of activated acyl groups catalyzed by FadD10. The protein is Acyl carrier protein BQ2027_MB0103 of Mycobacterium bovis (strain ATCC BAA-935 / AF2122/97).